The chain runs to 348 residues: LIM domain-containing protein unc-97 (348 aa).

LIM zinc-binding domains lie at 21 to 73, 82 to 132, 146 to 196, 205 to 255, and 264 to 315; these read CVRC…CEHD, CGKC…CREC, CHKC…CLRC, CGAC…CEQH, and CFKC…CKRC.

Interacts with unc-98. Component of an integrin containing attachment complex, composed of at least pat-2, pat-3, pat-4, pat-6, unc-52, unc-97 and unc-112. Restricted to tissue types that attach to the hypodermis, specifically body wall muscles, vulval muscles, and mechanosensory neurons.

The protein resides in the cell junction. The protein localises to the adherens junction. It is found in the nucleus. Functionally, component of an integrin containing attachment complex, which is required for muscle development and maintenance. Probably function in adherens junction. Affects the structural integrity of the integrin containing muscle adherens junctions and contributes to the mechanosensory functions of touch neurons. The polypeptide is LIM domain-containing protein unc-97 (Caenorhabditis elegans).